Consider the following 186-residue polypeptide: Potassium-transporting ATPase KdpC subunit (186 aa).

Residues 10–30 (LTIITMVLCGFLFPLAITLIG) traverse the membrane as a helical segment.

Belongs to the KdpC family. The system is composed of three essential subunits: KdpA, KdpB and KdpC.

It is found in the cell membrane. Its function is as follows. Part of the high-affinity ATP-driven potassium transport (or Kdp) system, which catalyzes the hydrolysis of ATP coupled with the electrogenic transport of potassium into the cytoplasm. This subunit acts as a catalytic chaperone that increases the ATP-binding affinity of the ATP-hydrolyzing subunit KdpB by the formation of a transient KdpB/KdpC/ATP ternary complex. The protein is Potassium-transporting ATPase KdpC subunit of Staphylococcus aureus (strain MRSA252).